We begin with the raw amino-acid sequence, 421 residues long: Nuclear envelope integral membrane protein 2 (421 aa).

Positions 1 to 22 (MPPGSWWLVLWLPPLATLPAGA) are cleaved as a signal peptide. The next 5 helical transmembrane spans lie at 147–167 (NVVDFRLFLVFATGIFLFFYA), 175–195 (VFYYSSGTVLGILMTLVFVLL), 206–226 (TFGALMIGCWFASVYVLCQLM), 232–252 (LWCGNRIYVLGYVLVVGLCSF), and 279–299 (LVLVYTGMAISQFAYAVMILL).

It belongs to the NEMP family.

It is found in the nucleus inner membrane. The polypeptide is Nuclear envelope integral membrane protein 2 (Nemp2) (Rattus norvegicus (Rat)).